A 151-amino-acid polypeptide reads, in one-letter code: Putative pre-16S rRNA nuclease (151 aa).

The protein belongs to the YqgF nuclease family.

It is found in the cytoplasm. Functionally, could be a nuclease involved in processing of the 5'-end of pre-16S rRNA. The chain is Putative pre-16S rRNA nuclease from Nostoc sp. (strain PCC 7120 / SAG 25.82 / UTEX 2576).